A 294-amino-acid polypeptide reads, in one-letter code: Nucleotide-binding protein CA_C0511 (294 aa).

8–15 (GLSGAGKT) is a binding site for ATP. 59–62 (DIRG) contributes to the GTP binding site.

This sequence belongs to the RapZ-like family.

Its function is as follows. Displays ATPase and GTPase activities. The protein is Nucleotide-binding protein CA_C0511 of Clostridium acetobutylicum (strain ATCC 824 / DSM 792 / JCM 1419 / IAM 19013 / LMG 5710 / NBRC 13948 / NRRL B-527 / VKM B-1787 / 2291 / W).